A 350-amino-acid chain; its full sequence is fMet-Leu-Phe receptor (350 aa).

Residues 1-27 lie on the Extracellular side of the membrane; sequence METNSSLPTNISGGTPAVSAGYLFLDI. 2 N-linked (GlcNAc...) asparagine glycosylation sites follow: asparagine 4 and asparagine 10. A helical transmembrane segment spans residues 28-50; it reads ITYLVFAVTFVLGVLGNGLVIWV. Residues 51–61 lie on the Cytoplasmic side of the membrane; it reads AGFRMTHTVTT. Residues 62 to 83 form a helical membrane-spanning segment; that stretch reads ISYLNLAVADFCFTSTLPFFMV. Residues 84–100 are Extracellular-facing; sequence RKAMGGHWPFGWFLCKF. Cysteine 98 and cysteine 176 are oxidised to a cystine. Residues 101 to 121 form a helical membrane-spanning segment; the sequence is VFTIVDINLFGSVFLIALIAL. The Cytoplasmic portion of the chain corresponds to 122-140; it reads DRCVCVLHPVWTQNHRTVS. Residues 141–162 form a helical membrane-spanning segment; it reads LAKKVIIGPWVMALLLTLPVII. The Extracellular portion of the chain corresponds to 163–205; that stretch reads RVTTVPGKTGTVACTFNFSPWTNDPKERINVAVAMLTVRGIIR. A helical transmembrane segment spans residues 206–226; that stretch reads FIIGFSAPMSIVAVSYGLIAT. Over 227-242 the chain is Cytoplasmic; it reads KIHKQGLIKSSRPLRV. The chain crosses the membrane as a helical span at residues 243 to 266; that stretch reads LSFVAAAFFLCWSPYQVVALIATV. The Extracellular segment spans residues 267 to 285; sequence RIRELLQGMYKEIGIAVDV. The chain crosses the membrane as a helical span at residues 286 to 305; sequence TSALAFFNSCLNPMLYVFMG. Over 306-350 the chain is Cytoplasmic; sequence QDFRERLIHALPASLERALTEDSTQTSDTATNSTLPSAEVELQAK. The tract at residues 325–350 is disordered; that stretch reads TEDSTQTSDTATNSTLPSAEVELQAK. Residues 326 to 341 are compositionally biased toward polar residues; that stretch reads EDSTQTSDTATNSTLP. Phosphoserine is present on serine 328. Phosphothreonine occurs at positions 329 and 331. Serine 332 bears the Phosphoserine mark. Phosphothreonine occurs at positions 334 and 336. Serine 338 carries the post-translational modification Phosphoserine. Phosphothreonine is present on threonine 339.

It belongs to the G-protein coupled receptor 1 family. In terms of assembly, interacts with S.aureus chemotaxis inhibitory protein (CHIPS); the interaction blocks the receptor and may thus inhibit the immune response. In terms of processing, phosphorylated; which is necessary for desensitization. As to expression, neutrophils.

It localises to the cell membrane. In terms of biological role, high affinity receptor for N-formyl-methionyl peptides (fMLP), which are powerful neutrophil chemotactic factors. Binding of fMLP to the receptor stimulates intracellular calcium mobilization and superoxide anion release. This response is mediated via a G-protein that activates a phosphatidylinositol-calcium second messenger system. Receptor for TAFA4, mediates its effects on chemoattracting macrophages, promoting phagocytosis and increasing ROS release. Receptor for cathepsin CTSG, leading to increased phagocyte chemotaxis. This chain is fMet-Leu-Phe receptor (FPR1), found in Homo sapiens (Human).